Consider the following 476-residue polypeptide: Adenosylhomocysteinase (476 aa).

Substrate is bound by residues Thr-62, Asp-141, and Glu-201. NAD(+) is bound at residue 202–204 (TTT). Residues Lys-231 and Asp-235 each coordinate substrate. Residues Asn-236, 265–270 (GYGDVG), Glu-288, Asn-323, 344–346 (IGH), and Asn-389 each bind NAD(+).

The protein belongs to the adenosylhomocysteinase family. It depends on NAD(+) as a cofactor.

It is found in the cytoplasm. It catalyses the reaction S-adenosyl-L-homocysteine + H2O = L-homocysteine + adenosine. It functions in the pathway amino-acid biosynthesis; L-homocysteine biosynthesis; L-homocysteine from S-adenosyl-L-homocysteine: step 1/1. Functionally, may play a key role in the regulation of the intracellular concentration of adenosylhomocysteine. The polypeptide is Adenosylhomocysteinase (Myxococcus xanthus (strain DK1622)).